Consider the following 755-residue polypeptide: Diamine oxidase [copper-containing] (755 aa).

The first 24 residues, 1-24 (MGRGTLALGWAGAALLLLQMLAAA), serve as a signal peptide directing secretion. N-linked (GlcNAc...) asparagine glycosylation is present at Asn-115. Cys-182 and Cys-186 are oxidised to a cystine. Asp-376 functions as the Proton acceptor in the catalytic mechanism. The cysteines at positions 394 and 420 are disulfide-linked. Tyr-464 functions as the Schiff-base intermediate with substrate; via topaquinone in the catalytic mechanism. A 2',4',5'-topaquinone modification is found at Tyr-464. Positions 513 and 515 each coordinate Cu(2+). Ca(2+)-binding residues include Asp-522, Leu-523, and Asp-524. Asn-541 carries an N-linked (GlcNAc...) asparagine glycan. Residues Glu-565, Phe-656, Asn-659, Glu-661, Asp-667, and Leu-668 each coordinate Ca(2+). His-678 contributes to the Cu(2+) binding site. N-linked (GlcNAc...) asparagine glycosylation is present at Asn-749.

Belongs to the copper/topaquinone oxidase family. As to quaternary structure, homodimer; disulfide-linked. It depends on Cu(2+) as a cofactor. The cofactor is Ca(2+). Requires L-topaquinone as cofactor. Topaquinone (TPQ) is generated by copper-dependent autoxidation of a specific tyrosyl residue. Post-translationally, N-glycosylated; the glycans are primarily linear, di-, or tribranched fucosylated complex type.

The protein resides in the secreted. It is found in the extracellular space. Its subcellular location is the cell membrane. It carries out the reaction histamine + O2 + H2O = imidazole-4-acetaldehyde + H2O2 + NH4(+). It catalyses the reaction N(tau)-methylhistamine + O2 + H2O = 1-methylimidazole-4-acetaldehyde + H2O2 + NH4(+). The catalysed reaction is putrescine + O2 + H2O = 4-aminobutanal + H2O2 + NH4(+). The enzyme catalyses cadaverine + O2 + H2O = 5-aminopentanal + H2O2 + NH4(+). Its activity is regulated as follows. Inhibited by amiloride and amiloride analogs. Catalyzes the oxidative deamination of primary amines to the corresponding aldehydes with the concomitant production of hydrogen peroxide and ammonia. Its preferred substrates in vitro are the diamines histamine and 1-methylhistamine and it could therefore play a role in allergic and immune responses. Has a broad specificity for diamines and can also act on cadaverine and putrescine, two products of amino acid catabolism. It could also act on polyamines, like spermidine and spermine though less efficiently, and regulate various biological processes. The sequence is that of Diamine oxidase [copper-containing] from Sus scrofa (Pig).